The following is a 317-amino-acid chain: R-spondin-3 (317 aa).

The first 20 residues, 1–20 (MQLQLISIVLILHFMEYTNC), serve as a signal peptide directing secretion. FU repeat units follow at residues 34–86 (SGVS…GFYG), 92–135 (RNDC…GLVP), and 139–183 (KKEC…EFEP). Cystine bridges form between Cys-41–Cys-48, Cys-45–Cys-54, Cys-57–Cys-76, Cys-80–Cys-95, Cys-98–Cys-105, Cys-102–Cys-111, Cys-114–Cys-125, Cys-129–Cys-189, Cys-195–Cys-237, Cys-206–Cys-213, and Cys-246–Cys-253. N-linked (GlcNAc...) asparagine glycosylation occurs at Asn-184. Residues 194 to 254 (HCEVSEWSEW…ECFVKKKRCK (61 aa)) form the TSP type-1 domain. Basic residues predominate over residues 251-268 (KRCKPPKGQRRGEKKKRF). The interval 251–317 (KRCKPPKGQR…RDQSRDAGTV (67 aa)) is disordered. Residues 274–303 (VTAEARRERKREREKETIDREESENRNKTE) are compositionally biased toward basic and acidic residues. Asn-300 is a glycosylation site (N-linked (GlcNAc...) asparagine).

It belongs to the R-spondin family. Binds heparin.

It is found in the secreted. In terms of biological role, activator of the canonical Wnt signaling pathway by acting as a ligand for lgr4-6 receptors, which acts as a key regulator of angiogenesis. Upon binding to lgr4-6 (lgr4, lgr5 or lgr6), lgr4-6 associate with phosphorylated lrp6 and frizzled receptors that are activated by extracellular Wnt receptors, triggering the canonical Wnt signaling pathway to increase expression of target genes. Acts both in the canonical. Wnt/beta-catenin-dependent pathway and in non-canonical Wnt signaling pathway. Acts as a key regulator of angiogenesis by controlling vascular stability and pruning: acts by activating the non-canonical Wnt signaling pathway in endothelial cells. Can also amplify Wnt signaling pathway independently of LGR4-6 receptors, possibly by acting as a direct antagonistic ligand to RNF43 and ZNRF3. The sequence is that of R-spondin-3 (rspo3) from Danio rerio (Zebrafish).